The primary structure comprises 201 residues: Large ribosomal subunit protein uL4 (201 aa).

The segment at 44–71 is disordered; it reads RAQKTRAEVTGSGKKPWRQKGTGRARSG.

It belongs to the universal ribosomal protein uL4 family. As to quaternary structure, part of the 50S ribosomal subunit.

Functionally, one of the primary rRNA binding proteins, this protein initially binds near the 5'-end of the 23S rRNA. It is important during the early stages of 50S assembly. It makes multiple contacts with different domains of the 23S rRNA in the assembled 50S subunit and ribosome. In terms of biological role, forms part of the polypeptide exit tunnel. In Pectobacterium carotovorum subsp. carotovorum (strain PC1), this protein is Large ribosomal subunit protein uL4.